Consider the following 306-residue polypeptide: Porphobilinogen deaminase (306 aa).

Cys239 carries the S-(dipyrrolylmethanemethyl)cysteine modification.

The protein belongs to the HMBS family. In terms of assembly, monomer. Dipyrromethane is required as a cofactor.

It catalyses the reaction 4 porphobilinogen + H2O = hydroxymethylbilane + 4 NH4(+). The protein operates within porphyrin-containing compound metabolism; protoporphyrin-IX biosynthesis; coproporphyrinogen-III from 5-aminolevulinate: step 2/4. In terms of biological role, tetrapolymerization of the monopyrrole PBG into the hydroxymethylbilane pre-uroporphyrinogen in several discrete steps. In Helicobacter acinonychis (strain Sheeba), this protein is Porphobilinogen deaminase.